The sequence spans 405 residues: L-carnitine CoA-transferase (405 aa).

2 residues coordinate CoA: Lys-97 and Arg-104. Residue Asp-169 is the Nucleophile of the active site.

Belongs to the CoA-transferase III family. CaiB subfamily. Homodimer.

It localises to the cytoplasm. It carries out the reaction crotonobetainyl-CoA + (R)-carnitine = crotonobetaine + (R)-carnitinyl-CoA. The catalysed reaction is 4-(trimethylamino)butanoyl-CoA + (R)-carnitine = (R)-carnitinyl-CoA + 4-(trimethylamino)butanoate. The protein operates within amine and polyamine metabolism; carnitine metabolism. Functionally, catalyzes the reversible transfer of the CoA moiety from gamma-butyrobetainyl-CoA to L-carnitine to generate L-carnitinyl-CoA and gamma-butyrobetaine. Is also able to catalyze the reversible transfer of the CoA moiety from gamma-butyrobetainyl-CoA or L-carnitinyl-CoA to crotonobetaine to generate crotonobetainyl-CoA. The sequence is that of L-carnitine CoA-transferase from Escherichia coli O7:K1 (strain IAI39 / ExPEC).